A 357-amino-acid polypeptide reads, in one-letter code: GDSL esterase/lipase At5g45950 (357 aa).

The signal sequence occupies residues 1–23; that stretch reads MLLVAFVTLLVAVALQPLPSVLS. The N-linked (GlcNAc...) asparagine glycan is linked to N37. The Nucleophile role is filled by S47. A glycan (N-linked (GlcNAc...) asparagine) is linked at N132. Catalysis depends on residues D331 and H334.

Belongs to the 'GDSL' lipolytic enzyme family.

The protein localises to the secreted. This Arabidopsis thaliana (Mouse-ear cress) protein is GDSL esterase/lipase At5g45950.